Consider the following 170-residue polypeptide: Zinc finger matrin-type protein 5 (170 aa).

Residues 51 to 79 (EQNKRPCRKFLLTGQCDFGSNCRFSHMSE) form a C3H1-type zinc finger. The interval 150–170 (PPSLRAPPPGGWPLQPRVQWG) is disordered.

As to quaternary structure, component of the U11/U12 snRNPs that are part of the U12-type spliceosome. Not found in the major spliceosome.

The protein localises to the nucleus. This is Zinc finger matrin-type protein 5 (ZMAT5) from Homo sapiens (Human).